A 186-amino-acid chain; its full sequence is ATP synthase subunit delta (186 aa).

The protein belongs to the ATPase delta chain family. F-type ATPases have 2 components, F(1) - the catalytic core - and F(0) - the membrane proton channel. F(1) has five subunits: alpha(3), beta(3), gamma(1), delta(1), epsilon(1). CF(0) has four main subunits: a(1), b(1), b'(1) and c(10-14). The alpha and beta chains form an alternating ring which encloses part of the gamma chain. F(1) is attached to F(0) by a central stalk formed by the gamma and epsilon chains, while a peripheral stalk is formed by the delta, b and b' chains.

The protein resides in the cell inner membrane. In terms of biological role, f(1)F(0) ATP synthase produces ATP from ADP in the presence of a proton or sodium gradient. F-type ATPases consist of two structural domains, F(1) containing the extramembraneous catalytic core and F(0) containing the membrane proton channel, linked together by a central stalk and a peripheral stalk. During catalysis, ATP synthesis in the catalytic domain of F(1) is coupled via a rotary mechanism of the central stalk subunits to proton translocation. Functionally, this protein is part of the stalk that links CF(0) to CF(1). It either transmits conformational changes from CF(0) to CF(1) or is implicated in proton conduction. This is ATP synthase subunit delta from Cereibacter sphaeroides (strain ATCC 17025 / ATH 2.4.3) (Rhodobacter sphaeroides).